A 130-amino-acid chain; its full sequence is Small ribosomal subunit protein uS9 (130 aa).

It belongs to the universal ribosomal protein uS9 family.

This chain is Small ribosomal subunit protein uS9, found in Pseudomonas syringae pv. tomato (strain ATCC BAA-871 / DC3000).